Reading from the N-terminus, the 1350-residue chain is ABC transporter C family member 13 (1350 aa).

An ABC transmembrane type-1 1 domain is found at Asn-107 to Gly-390. A run of 4 helical transmembrane segments spans residues Ile-111–Phe-131, Thr-143–Leu-163, Ile-215–Gln-235, and Leu-240–Ile-260. The disordered stretch occupies residues Glu-462–Asn-481. Residues Thr-470 to Asn-481 are compositionally biased toward low complexity. The region spanning Thr-473 to Lys-693 is the ABC transporter 1 domain. Gly-505–Thr-512 lines the ATP pocket. The region spanning Lys-774 to Ser-1061 is the ABC transmembrane type-1 2 domain. Helical transmembrane passes span Gly-776–Phe-796, Asp-816–Ile-836, Ile-887–Phe-907, Ile-909–Val-929, Ile-1003–Leu-1023, and Gly-1029–Val-1049. An ABC transporter 2 domain is found at Ile-1103–Lys-1337. Gly-1137–Ser-1144 contributes to the ATP binding site.

Belongs to the ABC transporter superfamily. ABCC family. Conjugate transporter (TC 3.A.1.208) subfamily.

The protein resides in the membrane. The sequence is that of ABC transporter C family member 13 (abcC13) from Dictyostelium discoideum (Social amoeba).